The following is an 877-amino-acid chain: DNA mismatch repair protein MutS (877 aa).

Position 630–637 (630–637) interacts with ATP; that stretch reads GPNMAGKS.

Belongs to the DNA mismatch repair MutS family.

Functionally, this protein is involved in the repair of mismatches in DNA. It is possible that it carries out the mismatch recognition step. This protein has a weak ATPase activity. In Jannaschia sp. (strain CCS1), this protein is DNA mismatch repair protein MutS.